A 221-amino-acid polypeptide reads, in one-letter code: 7-cyano-7-deazaguanine synthase (221 aa).

10 to 20 contacts ATP; the sequence is FSGGQDSTTCL. Zn(2+) contacts are provided by cysteine 186, cysteine 195, cysteine 198, and cysteine 201.

Belongs to the QueC family. As to quaternary structure, homodimer. Requires Zn(2+) as cofactor.

It carries out the reaction 7-carboxy-7-deazaguanine + NH4(+) + ATP = 7-cyano-7-deazaguanine + ADP + phosphate + H2O + H(+). Its pathway is purine metabolism; 7-cyano-7-deazaguanine biosynthesis. Catalyzes the ATP-dependent conversion of 7-carboxy-7-deazaguanine (CDG) to 7-cyano-7-deazaguanine (preQ(0)). The sequence is that of 7-cyano-7-deazaguanine synthase from Geobacillus thermodenitrificans (strain NG80-2).